A 190-amino-acid polypeptide reads, in one-letter code: Frataxin homolog, mitochondrial (190 aa).

Belongs to the frataxin family. As to quaternary structure, monomer (probable predominant form). Oligomer. Interacts with IscU. Component of the mitochondrial core iron-sulfur cluster (ISC) assembly complex at least composed of the cysteine desulfurase Nfs1, the scaffold protein IscU, the accessory protein bcn92/Isd11/Lyrm4, and probably fh/frataxin.

It localises to the mitochondrion. The catalysed reaction is 4 Fe(2+) + O2 + 4 H(+) = 4 Fe(3+) + 2 H2O. In terms of biological role, promotes the biosynthesis of heme as well as the assembly and repair of iron-sulfur clusters by delivering Fe(2+) to proteins involved in these pathways. May play a role in the protection against iron-catalyzed oxidative stress through its ability to catalyze the oxidation of Fe(2+) to Fe(3+). May be able to store large amounts of the metal in the form of a ferrihydrite mineral by oligomerization. Required for ecdysteroidogenesis in the prothoracic gland which is necessary for larval to pupal transition. This is Frataxin homolog, mitochondrial from Drosophila melanogaster (Fruit fly).